Reading from the N-terminus, the 131-residue chain is Global transcriptional regulator Spx (131 aa).

C10 and C13 are oxidised to a cystine.

It belongs to the ArsC family. Spx subfamily. As to quaternary structure, interacts with the C-terminal domain of the alpha subunit of the RNAP.

The protein localises to the cytoplasm. Global transcriptional regulator that plays a key role in stress response and exerts either positive or negative regulation of genes. Acts by interacting with the C-terminal domain of the alpha subunit of the RNA polymerase (RNAP). This interaction can enhance binding of RNAP to the promoter region of target genes and stimulate their transcription, or block interaction of RNAP with activator. The sequence is that of Global transcriptional regulator Spx from Staphylococcus haemolyticus (strain JCSC1435).